Reading from the N-terminus, the 134-residue chain is Small ribosomal subunit protein uS8c (134 aa).

Belongs to the universal ribosomal protein uS8 family. In terms of assembly, part of the 30S ribosomal subunit.

The protein localises to the plastid. Functionally, one of the primary rRNA binding proteins, it binds directly to 16S rRNA central domain where it helps coordinate assembly of the platform of the 30S subunit. The sequence is that of Small ribosomal subunit protein uS8c (rps8) from Epifagus virginiana (Beechdrops).